We begin with the raw amino-acid sequence, 866 residues long: Fibrinogen alpha chain (866 aa).

The N-terminal stretch at 1–19 (MFSMRIVCLVLSVVGTAWT) is a signal peptide. Ser22 is subject to Phosphoserine. The segment at 36-38 (GPR) is alpha-chain polymerization, binding distal domain of another fibrin gamma chain. Phosphoserine; by FAM20C is present on Ser45. Ser50 carries the post-translational modification Phosphoserine. The residue at position 56 (Ser56) is a Phosphoserine; by FAM20C. The stretch at 68–631 (CRMKGLIDEV…GHAKSRPVRD (564 aa)) forms a coiled coil. Residues 262–460 (ERPGGNEITR…SGSTTTTRRS (199 aa)) form a disordered region. Positions 270 to 299 (TRGGSTSYGTGSETESPRNPSSAGSWNSGS) are enriched in low complexity. Phosphoserine occurs at positions 281, 291, and 294. Residue Thr320 is glycosylated (O-linked (GalNAc...) threonine). Lys322 is covalently cross-linked (Isoglutamyl lysine isopeptide (Lys-Gln) (interchain with Q-41 in alpha-2-antiplasmin)). Gln347 participates in a covalent cross-link: Isoglutamyl lysine isopeptide (Gln-Lys) (interchain with K-?). Ser351 is a glycosylation site (O-linked (GalNAc...) serine). Residues 354–391 (PGSTGTWNPGSSERGSAGHWTSESSVSGSTGQWHSESG) are compositionally biased toward polar residues. Residue Ser364 is modified to Phosphoserine; by FAM20C. Gln385 is covalently cross-linked (Isoglutamyl lysine isopeptide (Gln-Lys) (interchain with K-?)). Thr412 bears the Phosphothreonine mark. A compositionally biased stretch (basic and acidic residues) spans 424-449 (TRREYHTEKLVTSKGDKELRTGKEKV). Low complexity predominate over residues 450-460 (TSGSTTTTRRS). At Ser451 the chain carries Phosphoserine. Residue Ser453 is glycosylated (N-linked (GlcNAc...) asparagine; in variant Caracas-2). Cys461 and Cys491 are joined by a disulfide. Ser501 carries the phosphoserine modification. Thr505 bears the Phosphothreonine mark. At Ser524 the chain carries Phosphoserine; by FAM20C. Isoglutamyl lysine isopeptide (Lys-Gln) (interchain with Q-?) cross-links involve residues Lys527 and Lys558. Residues 543–638 (ETESRGSESG…VRDCDDVLQT (96 aa)) are disordered. Ser560 carries the phosphoserine; by FAM20C modification. Pro565 bears the 4-hydroxyproline; by P4HA1 mark. Isoglutamyl lysine isopeptide (Lys-Gln) (interchain with Q-?) cross-links involve residues Lys575, Lys581, and Lys599. Residues 575–589 (KSSSYSKQFTSSTSY) are compositionally biased toward low complexity. Basic and acidic residues predominate over residues 594 to 617 (STFESKSYKMADEAGSEADHEGTH). A Phosphoserine; by FAM20C modification is found at Ser609. Residues 618–627 (STKRGHAKSR) show a composition bias toward basic residues. A Fibrinogen C-terminal domain is found at 623-864 (HAKSRPVRDC…AVRMKIRPLV (242 aa)). Asn686 is a glycosylation site (N-linked (GlcNAc...) asparagine). 4 residues coordinate Ca(2+): Asp791, Asp793, Trp795, and Glu797. Cysteines 799 and 812 form a disulfide.

Heterohexamer; disulfide linked. Contains 2 sets of 3 non-identical chains (alpha, beta and gamma). The 2 heterotrimers are in head to head conformation with the N-termini in a small central domain. As to quaternary structure, (Microbial infection) Interacts with Staphylococcus aureus protein Fib; this interaction inhibits fibrinogen-dependent platelet aggregation and protects the bacteria form phagocytosis. In terms of processing, the alpha chain is normally not N-glycosylated, even though glycosylation at Asn-686 was observed when a fragment of the protein was expressed in insect cells. It is well known that heterologous expression of isolated domains can lead to adventitious protein modifications. Besides, glycosylation at Asn-686 is supported by large-scale glycoproteomics studies, but the evidence is still quite tenuous. Most likely, Asn-686 is not glycosylated in the healthy human body, or only with low efficiency. O-glycosylated. Post-translationally, forms F13A-mediated cross-links between a glutamine and the epsilon-amino group of a lysine residue, forming fibronectin-fibrinogen heteropolymers. In terms of processing, about one-third of the alpha chains in the molecules in blood were found to be phosphorylated. Conversion of fibrinogen to fibrin is triggered by thrombin, which cleaves fibrinopeptides A and B from alpha and beta chains, and thus exposes the N-terminal polymerization sites responsible for the formation of the soft clot. The soft clot is converted into the hard clot by factor XIIIA which catalyzes the epsilon-(gamma-glutamyl)lysine cross-linking between gamma chains (stronger) and between alpha chains (weaker) of different monomers. Post-translationally, phosphorylated by FAM20C in the extracellular medium. In terms of tissue distribution, detected in blood plasma (at protein level).

The protein localises to the secreted. Its function is as follows. Cleaved by the protease thrombin to yield monomers which, together with fibrinogen beta (FGB) and fibrinogen gamma (FGG), polymerize to form an insoluble fibrin matrix. Fibrin has a major function in hemostasis as one of the primary components of blood clots. In addition, functions during the early stages of wound repair to stabilize the lesion and guide cell migration during re-epithelialization. Was originally thought to be essential for platelet aggregation, based on in vitro studies using anticoagulated blood. However, subsequent studies have shown that it is not absolutely required for thrombus formation in vivo. Enhances expression of SELP in activated platelets via an ITGB3-dependent pathway. Maternal fibrinogen is essential for successful pregnancy. Fibrin deposition is also associated with infection, where it protects against IFNG-mediated hemorrhage. May also facilitate the immune response via both innate and T-cell mediated pathways. This Homo sapiens (Human) protein is Fibrinogen alpha chain (FGA).